A 480-amino-acid polypeptide reads, in one-letter code: NADH-quinone oxidoreductase subunit N (480 aa).

A run of 13 helical transmembrane segments spans residues 11–31 (VIPE…DLFV), 38–58 (ITYG…IALA), 74–94 (GLSD…FLYS), 109–129 (YVLG…YSFL), 163–183 (FILG…LYGI), 200–220 (GAGL…GLAF), 239–259 (PTSV…AIIM), 273–293 (WQGM…VVAI), 301–321 (MLAY…LAGT), 329–349 (LFYT…IILL), 372–392 (FAFI…TVGF), 405–425 (VEMI…AFYY), and 451–471 (VVLS…GLLM).

Belongs to the complex I subunit 2 family. As to quaternary structure, NDH-1 is composed of 14 different subunits. Subunits NuoA, H, J, K, L, M, N constitute the membrane sector of the complex.

The protein resides in the cell inner membrane. It carries out the reaction a quinone + NADH + 5 H(+)(in) = a quinol + NAD(+) + 4 H(+)(out). In terms of biological role, NDH-1 shuttles electrons from NADH, via FMN and iron-sulfur (Fe-S) centers, to quinones in the respiratory chain. The immediate electron acceptor for the enzyme in this species is believed to be ubiquinone. Couples the redox reaction to proton translocation (for every two electrons transferred, four hydrogen ions are translocated across the cytoplasmic membrane), and thus conserves the redox energy in a proton gradient. The polypeptide is NADH-quinone oxidoreductase subunit N (Thioalkalivibrio sulfidiphilus (strain HL-EbGR7)).